A 502-amino-acid polypeptide reads, in one-letter code: ATP synthase subunit alpha (502 aa).

169 to 176 (GDRATGKT) serves as a coordination point for ATP.

It belongs to the ATPase alpha/beta chains family. F-type ATPases have 2 components, CF(1) - the catalytic core - and CF(0) - the membrane proton channel. CF(1) has five subunits: alpha(3), beta(3), gamma(1), delta(1), epsilon(1). CF(0) has three main subunits: a(1), b(2) and c(9-12). The alpha and beta chains form an alternating ring which encloses part of the gamma chain. CF(1) is attached to CF(0) by a central stalk formed by the gamma and epsilon chains, while a peripheral stalk is formed by the delta and b chains.

It is found in the cell inner membrane. It catalyses the reaction ATP + H2O + 4 H(+)(in) = ADP + phosphate + 5 H(+)(out). In terms of biological role, produces ATP from ADP in the presence of a proton gradient across the membrane. The alpha chain is a regulatory subunit. The protein is ATP synthase subunit alpha of Hydrogenobaculum sp. (strain Y04AAS1).